The primary structure comprises 316 residues: Acetylglutamate kinase (316 aa).

Substrate-binding positions include 76–77, R98, and N207; that span reads GG.

This sequence belongs to the acetylglutamate kinase family. ArgB subfamily.

The protein localises to the cytoplasm. It catalyses the reaction N-acetyl-L-glutamate + ATP = N-acetyl-L-glutamyl 5-phosphate + ADP. The protein operates within amino-acid biosynthesis; L-arginine biosynthesis; N(2)-acetyl-L-ornithine from L-glutamate: step 2/4. Catalyzes the ATP-dependent phosphorylation of N-acetyl-L-glutamate. In Paenarthrobacter aurescens (strain TC1), this protein is Acetylglutamate kinase.